The sequence spans 449 residues: UDP-glycosyltransferase 76E7 (449 aa).

Residues Ser275, 333–335, 350–358, and 372–375 each bind UDP-alpha-D-glucose; these read APQ, HCGWNSTLE, and TTDQ.

The protein belongs to the UDP-glycosyltransferase family.

The chain is UDP-glycosyltransferase 76E7 (UGT76E7) from Arabidopsis thaliana (Mouse-ear cress).